The following is a 430-amino-acid chain: Enolase (430 aa).

Q167 lines the (2R)-2-phosphoglycerate pocket. Residue E209 is the Proton donor of the active site. Mg(2+) contacts are provided by D246, E287, and D314. 3 residues coordinate (2R)-2-phosphoglycerate: K339, R368, and S369. K339 functions as the Proton acceptor in the catalytic mechanism.

This sequence belongs to the enolase family. Mg(2+) is required as a cofactor.

The protein resides in the cytoplasm. Its subcellular location is the secreted. It is found in the cell surface. The catalysed reaction is (2R)-2-phosphoglycerate = phosphoenolpyruvate + H2O. Its pathway is carbohydrate degradation; glycolysis; pyruvate from D-glyceraldehyde 3-phosphate: step 4/5. Catalyzes the reversible conversion of 2-phosphoglycerate (2-PG) into phosphoenolpyruvate (PEP). It is essential for the degradation of carbohydrates via glycolysis. The sequence is that of Enolase from Synechococcus sp. (strain ATCC 27144 / PCC 6301 / SAUG 1402/1) (Anacystis nidulans).